Here is a 156-residue protein sequence, read N- to C-terminus: Small ribosomal subunit protein uS7 (156 aa).

Belongs to the universal ribosomal protein uS7 family. Part of the 30S ribosomal subunit. Contacts proteins S9 and S11.

Its function is as follows. One of the primary rRNA binding proteins, it binds directly to 16S rRNA where it nucleates assembly of the head domain of the 30S subunit. Is located at the subunit interface close to the decoding center, probably blocks exit of the E-site tRNA. The sequence is that of Small ribosomal subunit protein uS7 from Mycobacterium leprae (strain Br4923).